Reading from the N-terminus, the 373-residue chain is GDSL esterase/lipase LIP-4 (373 aa).

An N-terminal signal peptide occupies residues 1–32 (MATLFLYSNTFSFFFITLVSLALLILRQPSRA). Serine 47 functions as the Nucleophile in the catalytic mechanism. N-linked (GlcNAc...) asparagine glycosylation is present at asparagine 93. Residues aspartate 339 and histidine 342 contribute to the active site.

It belongs to the 'GDSL' lipolytic enzyme family.

Its subcellular location is the secreted. This chain is GDSL esterase/lipase LIP-4 (LIP4), found in Arabidopsis thaliana (Mouse-ear cress).